The primary structure comprises 156 residues: 6,7-dimethyl-8-ribityllumazine synthase (156 aa).

5-amino-6-(D-ribitylamino)uracil contacts are provided by residues F22, 57–59 (AVE), and 81–83 (CVI). Residue 86–87 (GT) participates in (2S)-2-hydroxy-3-oxobutyl phosphate binding. H89 (proton donor) is an active-site residue. F114 is a binding site for 5-amino-6-(D-ribitylamino)uracil. R128 serves as a coordination point for (2S)-2-hydroxy-3-oxobutyl phosphate.

This sequence belongs to the DMRL synthase family. In terms of assembly, forms an icosahedral capsid composed of 60 subunits, arranged as a dodecamer of pentamers.

The catalysed reaction is (2S)-2-hydroxy-3-oxobutyl phosphate + 5-amino-6-(D-ribitylamino)uracil = 6,7-dimethyl-8-(1-D-ribityl)lumazine + phosphate + 2 H2O + H(+). The protein operates within cofactor biosynthesis; riboflavin biosynthesis; riboflavin from 2-hydroxy-3-oxobutyl phosphate and 5-amino-6-(D-ribitylamino)uracil: step 1/2. Catalyzes the formation of 6,7-dimethyl-8-ribityllumazine by condensation of 5-amino-6-(D-ribitylamino)uracil with 3,4-dihydroxy-2-butanone 4-phosphate. This is the penultimate step in the biosynthesis of riboflavin. The protein is 6,7-dimethyl-8-ribityllumazine synthase of Vibrio cholerae serotype O1 (strain ATCC 39315 / El Tor Inaba N16961).